We begin with the raw amino-acid sequence, 1067 residues long: Myocardin-related transcription factor B (1067 aa).

3 RPEL repeats span residues 46–71 (EVLQ…PPLK), 90–115 (NFLK…EETL), and 134–159 (DDLN…PVDL). Disordered regions lie at residues 175–223 (NLDT…NTTI) and 249–286 (PLSC…PRVK). 2 stretches are compositionally biased toward polar residues: residues 193–203 (QPASQESQGSA) and 212–223 (SDSSSPVSNTTI). Positions 268 to 283 (KHTEKPRSKKSKDPKP) are enriched in basic and acidic residues. Positions 390–424 (LDDMKVAELKMELKLRGLPVSGTKMDLIERLKPFQ) constitute an SAP domain. Residues 540–594 (GNTPNVELDAVEKDRKLQEKEKQIEELKRKLEQEQKLVEVLKKQLELEKRGQQQQ) adopt a coiled-coil conformation. Polar residues predominate over residues 799 to 819 (ISTSAQPQRSTQLTAVQNGPT). The segment at 799–829 (ISTSAQPQRSTQLTAVQNGPTSLHEKSSTPP) is disordered.

Interacts with SRF.

It localises to the nucleus. In terms of biological role, poor transcriptional factor which uses the canonical single or multiple CArG boxes DNA sequence. Acts as a cofactor of serum response factor (SRF) with the potential to modulate SRF target genes. This is Myocardin-related transcription factor B (mrtfb) from Xenopus laevis (African clawed frog).